The chain runs to 492 residues: Glutamyl-tRNA(Gln) amidotransferase subunit A (492 aa).

Active-site charge relay system residues include lysine 78 and serine 158. The active-site Acyl-ester intermediate is the serine 182.

It belongs to the amidase family. GatA subfamily. Heterotrimer of A, B and C subunits.

It carries out the reaction L-glutamyl-tRNA(Gln) + L-glutamine + ATP + H2O = L-glutaminyl-tRNA(Gln) + L-glutamate + ADP + phosphate + H(+). In terms of biological role, allows the formation of correctly charged Gln-tRNA(Gln) through the transamidation of misacylated Glu-tRNA(Gln) in organisms which lack glutaminyl-tRNA synthetase. The reaction takes place in the presence of glutamine and ATP through an activated gamma-phospho-Glu-tRNA(Gln). This Rhodopseudomonas palustris (strain ATCC BAA-98 / CGA009) protein is Glutamyl-tRNA(Gln) amidotransferase subunit A.